Reading from the N-terminus, the 91-residue chain is Small ribosomal subunit protein bS18 (91 aa).

The disordered stretch occupies residues 1–21; it reads MSDERAPQRSTGPRKKRPFQR. Positions 12–21 are enriched in basic residues; that stretch reads GPRKKRPFQR.

This sequence belongs to the bacterial ribosomal protein bS18 family. As to quaternary structure, part of the 30S ribosomal subunit. Forms a tight heterodimer with protein bS6.

Binds as a heterodimer with protein bS6 to the central domain of the 16S rRNA, where it helps stabilize the platform of the 30S subunit. In Geotalea daltonii (strain DSM 22248 / JCM 15807 / FRC-32) (Geobacter daltonii), this protein is Small ribosomal subunit protein bS18.